The chain runs to 318 residues: Large ribosomal subunit protein uL10 (318 aa).

Tyr-24 carries the phosphotyrosine modification. Thr-59 is subject to Phosphothreonine. Lys-264 participates in a covalent cross-link: Glycyl lysine isopeptide (Lys-Gly) (interchain with G-Cter in ubiquitin). Residue Lys-298 forms a Glycyl lysine isopeptide (Lys-Gly) (interchain with G-Cter in SUMO1); alternate linkage. A Glycyl lysine isopeptide (Lys-Gly) (interchain with G-Cter in SUMO2); alternate cross-link involves residue Lys-298. Residues Lys-298–Asp-318 are disordered. Positions Glu-303 to Met-312 are enriched in acidic residues. Phosphoserine is present on residues Ser-305 and Ser-308.

This sequence belongs to the universal ribosomal protein uL10 family. P0 forms a pentameric complex by interaction with dimers of P1 and P2. Identified in a IGF2BP1-dependent mRNP granule complex containing untranslated mRNAs. Interacts with APEX1. Interacts with FMR1 isoform 6. Ubiquitinated at Lys-264 by RNF14 and RNF25 in response to ribosome collisions (ribosome stalling).

It localises to the nucleus. It is found in the cytoplasm. Functionally, ribosomal protein P0 is the functional equivalent of E.coli protein L10. The protein is Large ribosomal subunit protein uL10 (RPLP0) of Oryctolagus cuniculus (Rabbit).